The primary structure comprises 345 residues: NADPH dehydrogenase (345 aa).

23–26 (SPMC) serves as a coordination point for FMN. Y28 lines the substrate pocket. Positions 60 and 102 each coordinate FMN. Position 164–167 (164–167 (HGAH)) interacts with substrate. FMN contacts are provided by residues R215 and 307–308 (GR).

The protein belongs to the NADH:flavin oxidoreductase/NADH oxidase family. NamA subfamily. Homotetramer. FMN serves as cofactor.

It catalyses the reaction A + NADPH + H(+) = AH2 + NADP(+). Its function is as follows. Catalyzes the reduction of the double bond of an array of alpha,beta-unsaturated aldehydes and ketones. It also reduces the nitro group of nitroester and nitroaromatic compounds. It could have a role in detoxification processes. This Bacillus cereus (strain ATCC 10987 / NRS 248) protein is NADPH dehydrogenase.